We begin with the raw amino-acid sequence, 787 residues long: Signal transducer and activator of transcription 5B (787 aa).

Position 90 is a phosphotyrosine (Tyr90). Phosphoserine is present on residues Ser128 and Ser193. Residues Lys232 to Thr321 form a required for interaction with NMI region. One can recognise an SH2 domain in the interval Trp589–Val686. Residue Tyr682 is modified to Phosphotyrosine. Position 699 is a phosphotyrosine; by HCK, JAK and PTK6 (Tyr699).

Belongs to the transcription factor STAT family. In terms of assembly, upon activation, forms homodimers. Forms also heterodimers with related family members. Binds NR3C1. Interacts with NCOA1. Interacts with NMI. Interacts with SOCS7. Interacts (via SH2 domain) with INSR. Interacts with CPEB3; this inhibits STAT5B-mediated transcriptional activation. Post-translationally, tyrosine phosphorylated in response to signaling via activated KIT, resulting in translocation to the nucleus. Tyrosine phosphorylated in response to signaling via activated FLT3; wild-type FLT3 results in much weaker phosphorylation than constitutively activated mutant FLT3. Alternatively, can be phosphorylated by JAK2. Phosphorylation at Tyr-699 by PTK6 or HCK leads to an increase of its transcriptional activity.

The protein localises to the cytoplasm. It is found in the nucleus. Carries out a dual function: signal transduction and activation of transcription. Mediates cellular responses to the cytokine KITLG/SCF and other growth factors. Binds to the GAS element and activates PRL-induced transcription. Positively regulates hematopoietic/erythroid differentiation. This Homo sapiens (Human) protein is Signal transducer and activator of transcription 5B (STAT5B).